The following is a 428-amino-acid chain: 3-phosphoshikimate 1-carboxyvinyltransferase (428 aa).

3-phosphoshikimate contacts are provided by Lys-23, Ser-24, and Arg-28. Lys-23 contacts phosphoenolpyruvate. Phosphoenolpyruvate-binding residues include Gly-97 and Arg-125. Positions 170, 171, 172, 198, 314, 337, and 341 each coordinate 3-phosphoshikimate. Residue Gln-172 participates in phosphoenolpyruvate binding. The Proton acceptor role is filled by Asp-314. Residues Arg-345, Arg-387, and Lys-412 each coordinate phosphoenolpyruvate.

It belongs to the EPSP synthase family. As to quaternary structure, monomer.

It localises to the cytoplasm. It catalyses the reaction 3-phosphoshikimate + phosphoenolpyruvate = 5-O-(1-carboxyvinyl)-3-phosphoshikimate + phosphate. Its pathway is metabolic intermediate biosynthesis; chorismate biosynthesis; chorismate from D-erythrose 4-phosphate and phosphoenolpyruvate: step 6/7. Its function is as follows. Catalyzes the transfer of the enolpyruvyl moiety of phosphoenolpyruvate (PEP) to the 5-hydroxyl of shikimate-3-phosphate (S3P) to produce enolpyruvyl shikimate-3-phosphate and inorganic phosphate. The sequence is that of 3-phosphoshikimate 1-carboxyvinyltransferase from Cronobacter sakazakii (strain ATCC BAA-894) (Enterobacter sakazakii).